The sequence spans 297 residues: Homoserine kinase (297 aa).

82–92 lines the ATP pocket; it reads PVSRGLGSSAA.

Belongs to the GHMP kinase family. Homoserine kinase subfamily.

Its subcellular location is the cytoplasm. It carries out the reaction L-homoserine + ATP = O-phospho-L-homoserine + ADP + H(+). Its pathway is amino-acid biosynthesis; L-threonine biosynthesis; L-threonine from L-aspartate: step 4/5. Catalyzes the ATP-dependent phosphorylation of L-homoserine to L-homoserine phosphate. In Clostridium botulinum (strain Okra / Type B1), this protein is Homoserine kinase.